A 775-amino-acid polypeptide reads, in one-letter code: Major facilitator superfamily domain-containing protein 6 (775 aa).

The residue at position 11 (Thr-11) is a Phosphothreonine. Residues 28–47 (NGICREPEPPSNETPSSTET) are disordered. Residues 38 to 47 (SNETPSSTET) are compositionally biased toward low complexity. 12 helical membrane-spanning segments follow: residues 74 to 94 (VFYFFFYSAYGSLYPLLPVYY), 106 to 126 (LLVGIRYFIEFCSAPFWGVVA), 133 to 153 (KIVLLFSLLCWVLFNLGIGFV), 289 to 309 (AIFLIILVVVIIGEFFSASSV), 338 to 358 (WGLAMLSVGIGIDYTHIDVLI), 372 to 392 (QIVFIVFGVLMTMALIVATQF), 453 to 473 (VLFVAWFMGFGYGFVFTFLYW), 482 to 502 (TTLFGVCSVLSHVSELTAYFF), 510 to 530 (IGHIRVLYIGLACNTARYIYI), 547 to 567 (GVTHAAIWAACISYLSAAVPP), 582 to 602 (LGLGRGCGAMIGGVLVNYFGA), and 608 to 628 (GIGMACLVILLLFALIQWLAV).

This sequence belongs to the major facilitator superfamily. MFSD6 family.

It is found in the membrane. MHC class I receptor. Binds only to H-2 class I histocompatibility antigen, K-D alpha chain (H-2K(D)). In Mus musculus (Mouse), this protein is Major facilitator superfamily domain-containing protein 6 (Mfsd6).